Here is a 149-residue protein sequence, read N- to C-terminus: Large ribosomal subunit protein bL9 (149 aa).

This sequence belongs to the bacterial ribosomal protein bL9 family.

In terms of biological role, binds to the 23S rRNA. This is Large ribosomal subunit protein bL9 from Thermotoga maritima (strain ATCC 43589 / DSM 3109 / JCM 10099 / NBRC 100826 / MSB8).